Reading from the N-terminus, the 158-residue chain is 2-C-methyl-D-erythritol 2,4-cyclodiphosphate synthase (158 aa).

Residues D8 and H10 each contribute to the a divalent metal cation site. 4-CDP-2-C-methyl-D-erythritol 2-phosphate is bound by residues 8–10 (DVH) and 34–35 (HS). H42 lines the a divalent metal cation pocket. Residues 56-58 (DIG), 61-65 (FPDTD), 100-106 (AQRPKMA), 132-135 (TTEE), F139, and R142 contribute to the 4-CDP-2-C-methyl-D-erythritol 2-phosphate site.

The protein belongs to the IspF family. As to quaternary structure, homotrimer. Requires a divalent metal cation as cofactor.

It carries out the reaction 4-CDP-2-C-methyl-D-erythritol 2-phosphate = 2-C-methyl-D-erythritol 2,4-cyclic diphosphate + CMP. The protein operates within isoprenoid biosynthesis; isopentenyl diphosphate biosynthesis via DXP pathway; isopentenyl diphosphate from 1-deoxy-D-xylulose 5-phosphate: step 4/6. Its function is as follows. Involved in the biosynthesis of isopentenyl diphosphate (IPP) and dimethylallyl diphosphate (DMAPP), two major building blocks of isoprenoid compounds. Catalyzes the conversion of 4-diphosphocytidyl-2-C-methyl-D-erythritol 2-phosphate (CDP-ME2P) to 2-C-methyl-D-erythritol 2,4-cyclodiphosphate (ME-CPP) with a corresponding release of cytidine 5-monophosphate (CMP). The polypeptide is 2-C-methyl-D-erythritol 2,4-cyclodiphosphate synthase (Pelobacter propionicus (strain DSM 2379 / NBRC 103807 / OttBd1)).